The chain runs to 923 residues: Probable dipeptidyl-aminopeptidase B (923 aa).

Residues 1–16 are compositionally biased toward basic and acidic residues; that stretch reads MATEKGHGRDDEERVP. Positions 1–21 are disordered; it reads MATEKGHGRDDEERVPLTRGS. Topologically, residues 1–99 are cytoplasmic; the sequence is MATEKGHGRD…KPMHKSVKIA (99 aa). Residues 100 to 120 form a helical; Signal-anchor for type II membrane protein membrane-spanning segment; sequence LWTLLFLSLGGWSLAFVLFIF. Residues 121–923 are Vacuolar-facing; the sequence is RSHDTYETPI…GLSYNFKHLH (803 aa). N-linked (GlcNAc...) asparagine glycans are attached at residues asparagine 135, asparagine 351, and asparagine 574. The active-site Charge relay system is the serine 756. Asparagine 815 carries an N-linked (GlcNAc...) asparagine glycan. Active-site charge relay system residues include aspartate 833 and histidine 866. Residue asparagine 902 is glycosylated (N-linked (GlcNAc...) asparagine).

The protein belongs to the peptidase S9B family.

Its subcellular location is the vacuole membrane. It catalyses the reaction Release of an N-terminal dipeptide, Xaa-Yaa-|-Zaa-, from a polypeptide, preferentially when Yaa is Pro, provided Zaa is neither Pro nor hydroxyproline.. Its function is as follows. Type IV dipeptidyl-peptidase which removes N-terminal dipeptides sequentially from polypeptides having unsubstituted N-termini provided that the penultimate residue is proline. The chain is Probable dipeptidyl-aminopeptidase B (DAPB) from Ajellomyces capsulatus (strain G186AR / H82 / ATCC MYA-2454 / RMSCC 2432) (Darling's disease fungus).